The chain runs to 154 residues: Myoglobin (154 aa).

One can recognise a Globin domain in the interval 2 to 148; that stretch reads GLSDQEWQQV…FRNDMASKYK (147 aa). Nitrite is bound at residue His-65. His-65 provides a ligand contact to O2. His-94 serves as a coordination point for heme b.

The protein belongs to the globin family. In terms of assembly, monomeric.

It is found in the cytoplasm. The protein localises to the sarcoplasm. It carries out the reaction Fe(III)-heme b-[protein] + nitric oxide + H2O = Fe(II)-heme b-[protein] + nitrite + 2 H(+). The enzyme catalyses H2O2 + AH2 = A + 2 H2O. Monomeric heme protein which primary function is to store oxygen and facilitate its diffusion within muscle tissues. Reversibly binds oxygen through a pentacoordinated heme iron and enables its timely and efficient release as needed during periods of heightened demand. Depending on the oxidative conditions of tissues and cells, and in addition to its ability to bind oxygen, it also has a nitrite reductase activity whereby it regulates the production of bioactive nitric oxide. Under stress conditions, like hypoxia and anoxia, it also protects cells against reactive oxygen species thanks to its pseudoperoxidase activity. This chain is Myoglobin (MB), found in Aethia pygmaea (Whiskered auklet).